The chain runs to 285 residues: Inositol oxygenase (285 aa).

Arg-29 contacts substrate. Ser-33 is modified (phosphoserine). A substrate-binding site is contributed by 85–87 (DES). Residues His-98, His-123, and Asp-124 each contribute to the Fe cation site. Substrate is bound by residues Lys-127 and 141–142 (GD). His-194, His-220, and Asp-253 together coordinate Fe cation. Residue 220 to 221 (HS) coordinates substrate.

This sequence belongs to the myo-inositol oxygenase family. Fe cation serves as cofactor.

The protein resides in the cytoplasm. The enzyme catalyses myo-inositol + O2 = D-glucuronate + H2O + H(+). Its pathway is polyol metabolism; myo-inositol degradation into D-glucuronate; D-glucuronate from myo-inositol: step 1/1. This is Inositol oxygenase (MIOX) from Pongo abelii (Sumatran orangutan).